Consider the following 291-residue polypeptide: Formamidopyrimidine-DNA glycosylase (291 aa).

Pro-2 serves as the catalytic Schiff-base intermediate with DNA. Glu-3 (proton donor) is an active-site residue. Lys-58 acts as the Proton donor; for beta-elimination activity in catalysis. 3 residues coordinate DNA: His-104, Arg-123, and Lys-166. An FPG-type zinc finger spans residues 257–291 (KVYDREGKPCPTCGGTVQRFVQNGRSTFWCPKCQK). The Proton donor; for delta-elimination activity role is filled by Arg-281.

It belongs to the FPG family. In terms of assembly, monomer. Requires Zn(2+) as cofactor.

It catalyses the reaction Hydrolysis of DNA containing ring-opened 7-methylguanine residues, releasing 2,6-diamino-4-hydroxy-5-(N-methyl)formamidopyrimidine.. The catalysed reaction is 2'-deoxyribonucleotide-(2'-deoxyribose 5'-phosphate)-2'-deoxyribonucleotide-DNA = a 3'-end 2'-deoxyribonucleotide-(2,3-dehydro-2,3-deoxyribose 5'-phosphate)-DNA + a 5'-end 5'-phospho-2'-deoxyribonucleoside-DNA + H(+). Involved in base excision repair of DNA damaged by oxidation or by mutagenic agents. Acts as a DNA glycosylase that recognizes and removes damaged bases. Has a preference for oxidized purines, such as 7,8-dihydro-8-oxoguanine (8-oxoG). Has AP (apurinic/apyrimidinic) lyase activity and introduces nicks in the DNA strand. Cleaves the DNA backbone by beta-delta elimination to generate a single-strand break at the site of the removed base with both 3'- and 5'-phosphates. In Rhodopseudomonas palustris (strain TIE-1), this protein is Formamidopyrimidine-DNA glycosylase.